The following is a 193-amino-acid chain: Xanthine phosphoribosyltransferase (193 aa).

2 residues coordinate xanthine: Leu-20 and Asn-27. A 5-phospho-alpha-D-ribose 1-diphosphate-binding site is contributed by 127–131 (AYGNA). Position 155 (Lys-155) interacts with xanthine.

It belongs to the purine/pyrimidine phosphoribosyltransferase family. Xpt subfamily. As to quaternary structure, homodimer.

The protein localises to the cytoplasm. The enzyme catalyses XMP + diphosphate = xanthine + 5-phospho-alpha-D-ribose 1-diphosphate. It participates in purine metabolism; XMP biosynthesis via salvage pathway; XMP from xanthine: step 1/1. Converts the preformed base xanthine, a product of nucleic acid breakdown, to xanthosine 5'-monophosphate (XMP), so it can be reused for RNA or DNA synthesis. In Porphyromonas gingivalis (strain ATCC BAA-308 / W83), this protein is Xanthine phosphoribosyltransferase.